A 160-amino-acid chain; its full sequence is Monooxygenase AacuO (160 aa).

The protein belongs to the avfA family.

The protein operates within secondary metabolite biosynthesis. Functionally, monooxygenase; part of the gene cluster that mediates the biosynthesis of the tetrahydroxanthone dimer secalonic acid D. The pathway begins with the synthesis of atrochrysone thioester by the polyketide synthase AacuL. The atrochrysone carboxyl ACP thioesterase AacuM then breaks the thioester bond and releases the atrochrysone carboxylic acid from AacuL. Atrochrysone carboxylic acid is decarboxylated by the decarboxylase AacuI, and oxidized by the anthrone oxygenase AacuG to yield emodin. Emodin is then reduced to emodin hydroquinone by a yet unidentified oxidoreductase. A-ring reduction by the short chain dehydrogenase AacuN, dehydration by the scytalone dehydratase-like protein AacuK and probable spontaneous re-oxidation, results in overall deoxygenation to chrysophanol. Baeyer-Villiger oxidation by the Baeyer-Villiger monooxygenase (BVMO) AacuH then yields monodictyphenone. Monodictyphenone is transformed into compounds with the tetrahydroxanthone skeleton via methylesterification by the methyltransferase AacuQ, followed by the action of the flavin-dependent monooxygenase AacuC, the isomerase AacuP, and the short chain dehydrogenase/reductase AacuF or AacuD. AacuF and AacuD should accept the same compound as a substrate but perform the ketoreduction with a different stereoselectivity, thus yielding blennolides B and A, respectively. In the final step of the biosynthesis, the cytochrome P450 monooxygenase AacuE accepts blennolide B and/or blennolide A to conduct the dimerization reaction to furnish the tetrahydroxanthone dimers, secalonic acids D, B, and F. The protein is Monooxygenase AacuO of Aspergillus aculeatus (strain ATCC 16872 / CBS 172.66 / WB 5094).